The chain runs to 308 residues: MVGLQPSEVPPTTVVKFLGAGTAACFADLLTFPLDTAKVRLQIQGENPGVQSVQYRGVLGTILTMVRTEGPRSPYSGLVAGLHRQMSFASIRIGLYDSVKQFYTPKGTDHSSVAIRILAGCTTGAMAVTCAQPTDVVKVRFQAMIRLGTGGERKYRGTMDAYRTIAREEGVRGLWKGTWPNITRNAIVNCAEMVTYDIIKEKLLDSHLFTDNFPCHFVSAFGAGFCATVVASPVDVVKTRYMNAPPGRYRSPLHCMLRMVAQEGPTAFYKGFMPSFLRLGSWNVMMFVTYEQLKRALMKVQVLRESPF.

Topologically, residues 1–10 (MVGLQPSEVP) are mitochondrial intermembrane. A helical transmembrane segment spans residues 11-32 (PTTVVKFLGAGTAACFADLLTF). 3 Solcar repeats span residues 11–102 (PTTV…VKQF), 111–202 (SSVA…IKEK), and 211–296 (DNFP…LKRA). Residues 33-73 (PLDTAKVRLQIQGENPGVQSVQYRGVLGTILTMVRTEGPRS) are Mitochondrial matrix-facing. Residues 74-96 (PYSGLVAGLHRQMSFASIRIGLY) traverse the membrane as a helical segment. Over 97–116 (DSVKQFYTPKGTDHSSVAIR) the chain is Mitochondrial intermembrane. Residues 117 to 133 (ILAGCTTGAMAVTCAQP) form a helical membrane-spanning segment. The Mitochondrial matrix segment spans residues 134–179 (TDVVKVRFQAMIRLGTGGERKYRGTMDAYRTIAREEGVRGLWKGTW). Residues 180 to 196 (PNITRNAIVNCAEMVTY) form a helical membrane-spanning segment. The Mitochondrial intermembrane portion of the chain corresponds to 197–213 (DIIKEKLLDSHLFTDNF). The chain crosses the membrane as a helical span at residues 214-233 (PCHFVSAFGAGFCATVVASP). The Mitochondrial matrix portion of the chain corresponds to 234 to 267 (VDVVKTRYMNAPPGRYRSPLHCMLRMVAQEGPTA). Residues 268-290 (FYKGFMPSFLRLGSWNVMMFVTY) form a helical membrane-spanning segment. The segment at 275-297 (SFLRLGSWNVMMFVTYEQLKRAL) is purine nucleotide binding. The Mitochondrial intermembrane portion of the chain corresponds to 291–308 (EQLKRALMKVQVLRESPF).

Belongs to the mitochondrial carrier (TC 2.A.29) family. As to quaternary structure, interacts with HAX1; the interaction is direct and calcium-dependent.

It is found in the mitochondrion inner membrane. Functionally, putative transmembrane transporter that plays a role in mitochondrial metabolism via an as yet unclear mechanism. Originally, this mitochondrial protein was thought to act as a proton transmembrane transporter from the mitochondrial intermembrane space into the matrix, causing proton leaks through the inner mitochondrial membrane, thereby uncoupling mitochondrial membrane potential generation from ATP synthesis. However, this function is controversial and uncoupling may not be the function, or at least not the main function, but rather a consequence of more conventional metabolite transporter activity. This is Putative mitochondrial transporter UCP3 from Rattus norvegicus (Rat).